A 312-amino-acid polypeptide reads, in one-letter code: Malate dehydrogenase (312 aa).

Residues 7–13 and aspartate 34 contribute to the NAD(+) site; that span reads GAAGGIG. Residues arginine 81 and arginine 87 each coordinate substrate. NAD(+) contacts are provided by residues asparagine 94 and 117–119; that span reads ITN. Substrate contacts are provided by asparagine 119 and arginine 153. Histidine 177 functions as the Proton acceptor in the catalytic mechanism. Residue methionine 227 participates in NAD(+) binding.

The protein belongs to the LDH/MDH superfamily. MDH type 1 family. As to quaternary structure, homodimer.

It catalyses the reaction (S)-malate + NAD(+) = oxaloacetate + NADH + H(+). In terms of biological role, catalyzes the reversible oxidation of malate to oxaloacetate. This chain is Malate dehydrogenase, found in Salmonella arizonae (strain ATCC BAA-731 / CDC346-86 / RSK2980).